The primary structure comprises 205 residues: High frequency lysogenization protein HflD homolog (205 aa).

This sequence belongs to the HflD family.

The protein localises to the cytoplasm. It is found in the cell inner membrane. This Photobacterium profundum (strain SS9) protein is High frequency lysogenization protein HflD homolog.